We begin with the raw amino-acid sequence, 469 residues long: Protein POLLENLESS 3-LIKE 1 (469 aa).

Residues methionine 1–serine 20 are disordered. TPR repeat units follow at residues aspartate 88–glutamate 121, aspartate 124–aspartate 157, and alanine 184–asparagine 217. A coiled-coil region spans residues arginine 139–alanine 191. Residues asparagine 314–proline 338 are compositionally biased toward polar residues. Positions asparagine 314 to arginine 339 are disordered.

This sequence belongs to the MS5 protein family. Expressed in floral and vegetative organs. Also barely detectable in leaves and stems.

It is found in the nucleus. In terms of biological role, probably involved in the regulation of cell division. The chain is Protein POLLENLESS 3-LIKE 1 from Arabidopsis thaliana (Mouse-ear cress).